The chain runs to 360 residues: Plastid lipid-associated protein 3, chloroplastic (360 aa).

The segment covering 1–37 (MATLFTVTTTSRPFPANPSKTFSPSISLKPNALSFSL) has biased composition (polar residues). The N-terminal 52 residues, 1 to 52 (MATLFTVTTTSRPFPANPSKTFSPSISLKPNALSFSLTHHRPPRPLRFSKIR), are a transit peptide targeting the chloroplast. The interval 1–130 (MATLFTVTTT…EWEEREADDG (130 aa)) is disordered. The segment covering 38 to 50 (THHRPPRPLRFSK) has biased composition (basic residues). Positions 53–68 (SSLPSESDSEPEGGYS) are enriched in low complexity. Residues 117 to 127 (TNEDEWEEREA) are compositionally biased toward acidic residues.

This sequence belongs to the PAP/fibrillin family. As to expression, ubiquitous expression among various organs, but only at a very low level.

It is found in the plastid. Its subcellular location is the chloroplast. This chain is Plastid lipid-associated protein 3, chloroplastic (PAP3), found in Brassica campestris (Field mustard).